Consider the following 201-residue polypeptide: Casparian strip membrane protein 4 (201 aa).

Residues 1-23 (MEGKAAVTTSTEHGDGEASRTAA) form a disordered region. At 1–41 (MEGKAAVTTSTEHGDGEASRTAARTVVSGSSRGGAASRALS) the chain is on the cytoplasmic side. The helical transmembrane segment at 42 to 62 (VADLILRVVAVVAIVDSAIAM) threads the bilayer. Topologically, residues 63–87 (GTTNQTLPFFTQFLRFKAQYSDLPT) are extracellular. Asn-66 is a glycosylation site (N-linked (GlcNAc...) asparagine). The chain crosses the membrane as a helical span at residues 88–108 (LTLFVVANSAVTAYLVLSIPL). Residues 109–122 (SVVHIIRSRASYSR) lie on the Cytoplasmic side of the membrane. A helical transmembrane segment spans residues 123–143 (LVLIFLDSVMLALVAAVASAS). Residues 144 to 172 (AAIVYLAHKGNVRANWFAVCQQFDSFCER) are Extracellular-facing. Residues 173 to 193 (ISGPLIGSFAAMAVLLLLVLL) traverse the membrane as a helical segment. At 194–201 (SAAALARR) the chain is on the cytoplasmic side.

The protein belongs to the Casparian strip membrane proteins (CASP) family. In terms of assembly, homodimer and heterodimers.

The protein localises to the cell membrane. Regulates membrane-cell wall junctions and localized cell wall deposition. Required for establishment of the Casparian strip membrane domain (CSD) and the subsequent formation of Casparian strips, a cell wall modification of the root endodermis that determines an apoplastic barrier between the intraorganismal apoplasm and the extraorganismal apoplasm and prevents lateral diffusion. This Oryza sativa subsp. japonica (Rice) protein is Casparian strip membrane protein 4.